A 491-amino-acid chain; its full sequence is Nickel-binding protein NikA (491 aa).

A signal peptide spans 1 to 18 (MKFKRLATIFSAVLVLSG). The N-palmitoyl cysteine moiety is linked to residue C19. The S-diacylglycerol cysteine moiety is linked to residue C19.

The protein belongs to the bacterial solute-binding protein 5 family. The complex is composed of two ATP-binding proteins (NikD and NikE), two transmembrane proteins (NikB and NikC) and a solute-binding protein (NikA).

It localises to the cell membrane. Its function is as follows. Part of the ABC transporter complex NikABCDE (Opp2) involved in nickel import. Binds nickel and transfers it to the membrane-bound permease. Required for full urease activity and plays a significant role in the virulence of S.aureus during urinary tract infection (UTI). May bind nickel via a nickel-chelator. The chain is Nickel-binding protein NikA from Staphylococcus aureus (strain NCTC 8325 / PS 47).